A 44-amino-acid polypeptide reads, in one-letter code: uncharacterized protein (44 aa).

This is an uncharacterized protein from Methanocaldococcus jannaschii (strain ATCC 43067 / DSM 2661 / JAL-1 / JCM 10045 / NBRC 100440) (Methanococcus jannaschii).